A 531-amino-acid polypeptide reads, in one-letter code: Apolipoprotein N-acyltransferase (531 aa).

Helical transmembrane passes span isoleucine 8–valine 28, phenylalanine 34–valine 54, proline 69–glycine 89, leucine 105–alanine 125, isoleucine 136–glycine 156, valine 178–isoleucine 198, and glycine 207–alanine 227. The CN hydrolase domain maps to valine 243–glycine 493. The active-site Proton acceptor is glutamate 287. Lysine 351 is an active-site residue. The Nucleophile role is filled by cysteine 405. Residues isoleucine 507–asparagine 527 form a helical membrane-spanning segment.

It belongs to the CN hydrolase family. Apolipoprotein N-acyltransferase subfamily.

The protein resides in the cell inner membrane. The enzyme catalyses N-terminal S-1,2-diacyl-sn-glyceryl-L-cysteinyl-[lipoprotein] + a glycerophospholipid = N-acyl-S-1,2-diacyl-sn-glyceryl-L-cysteinyl-[lipoprotein] + a 2-acyl-sn-glycero-3-phospholipid + H(+). It functions in the pathway protein modification; lipoprotein biosynthesis (N-acyl transfer). Catalyzes the phospholipid dependent N-acylation of the N-terminal cysteine of apolipoprotein, the last step in lipoprotein maturation. This chain is Apolipoprotein N-acyltransferase, found in Sinorhizobium medicae (strain WSM419) (Ensifer medicae).